The primary structure comprises 121 residues: MQVGIDIIEISRIKRAYERYNRLFLKRILTESEIEWCLNKPRPFESVAVRFACKEAFAKAMGTGISGELSWQSIEILNDKEGKPTLFLKQPFNGLKSEQVKLSLSHTHEYAVAVVIIEPDK.

Mg(2+) is bound by residues Asp-6 and Glu-55.

The protein belongs to the P-Pant transferase superfamily. AcpS family. Mg(2+) is required as a cofactor.

The protein localises to the cytoplasm. It carries out the reaction apo-[ACP] + CoA = holo-[ACP] + adenosine 3',5'-bisphosphate + H(+). Its function is as follows. Transfers the 4'-phosphopantetheine moiety from coenzyme A to a Ser of acyl-carrier-protein. The polypeptide is Holo-[acyl-carrier-protein] synthase (Chloroherpeton thalassium (strain ATCC 35110 / GB-78)).